Reading from the N-terminus, the 2527-residue chain is Neurogenic locus notch homolog protein 1 (2527 aa).

The signal sequence occupies residues 1 to 36 (MGRSDSRAGALLEGGCEQNIDPRRAAHCHHPRLATS). Residues 37-1741 (SLRCSQPSGT…VEPPLPSQLH (1705 aa)) lie on the Extracellular side of the membrane. 33 disulfide bridges follow: cysteine 40–cysteine 53, cysteine 47–cysteine 62, cysteine 64–cysteine 73, cysteine 79–cysteine 90, cysteine 84–cysteine 103, cysteine 105–cysteine 114, cysteine 122–cysteine 133, cysteine 127–cysteine 143, cysteine 145–cysteine 154, cysteine 160–cysteine 171, cysteine 165–cysteine 180, cysteine 182–cysteine 191, cysteine 198–cysteine 211, cysteine 205–cysteine 220, cysteine 222–cysteine 231, cysteine 238–cysteine 249, cysteine 243–cysteine 259, cysteine 261–cysteine 270, cysteine 277–cysteine 288, cysteine 282–cysteine 297, cysteine 299–cysteine 308, cysteine 315–cysteine 328, cysteine 322–cysteine 337, cysteine 339–cysteine 348, cysteine 355–cysteine 366, cysteine 360–cysteine 375, cysteine 377–cysteine 386, cysteine 392–cysteine 403, cysteine 397–cysteine 414, cysteine 416–cysteine 425, cysteine 432–cysteine 445, cysteine 439–cysteine 454, and cysteine 456–cysteine 465. An N-linked (GlcNAc...) asparagine glycan is attached at asparagine 57. EGF-like domains lie at 75–115 (DPNP…PLCL), 118–155 (LDNA…KSCQ), and 156–192 (QADP…PTCR). O-linked (Glc...) serine glycosylation occurs at serine 81. Threonine 89 carries O-linked (Fuc...) threonine glycosylation. A glycan (O-linked (Fuc...) threonine) is linked at threonine 132. Serine 162 carries O-linked (Glc...) serine glycosylation. In terms of domain architecture, EGF-like 4; calcium-binding spans 194–232 (DVNECSQNPGLCRHGGTCHNEIGSYRCVCRATHTGPHCE). Threonine 210 carries O-linked (Fuc...) threonine glycosylation. The EGF-like 5 domain occupies 234–271 (PYVPCSPSPCQNGGTCRPTGDTTHECACLPGFAGQNCE). Residue threonine 248 is glycosylated (O-linked (Fuc...) threonine; alternate). Residue threonine 248 is glycosylated (O-linked (GalNAc...) threonine; alternate). One can recognise an EGF-like 6; calcium-binding domain in the interval 273–309 (NVDDCPGNNCKNGGACVDGVNTYNCRCPPEWTGQYCT). The EGF-like 7; calcium-binding domain maps to 311 to 349 (DVDECQLMPNACQNGGTCHNTHGGYNCVCVNGWTGEDCS). An O-linked (Fuc...) threonine glycan is attached at threonine 327. The region spanning 351 to 387 (NIDDCASAACFQGATCHDRVASFYCECPHGRTGLLCH) is the EGF-like 8; calcium-binding domain. Serine 357 carries an O-linked (Glc...) serine glycan. Threonine 365 carries O-linked (Fuc...) threonine glycosylation. Residues 388 to 426 (LNDACISNPCNEGSNCDTNPVNGKAICTCPSGYTGPACS) enclose the EGF-like 9 domain. Residue serine 394 is glycosylated (O-linked (Glc...) serine). The 39-residue stretch at 428 to 466 (DVDECALGANPCEHAGKCLNTLGSFECQCLQGYTGPRCE) folds into the EGF-like 10; calcium-binding domain. The tract at residues 436 to 437 (AN) is interaction with DLL4. Positions 448 and 451 each coordinate Ca(2+). An O-linked (Glc...) serine glycan is attached at serine 451. The segment at 464–468 (RCEID) is interaction with DLL4. Residues aspartate 468, valine 469, and glutamate 471 each contribute to the Ca(2+) site. The EGF-like 11; calcium-binding domain maps to 468-504 (DVNECISNPCQNDATCLDQIGEFQCICMPGYEGVYCE). Intrachain disulfides connect cysteine 472–cysteine 483, cysteine 477–cysteine 492, and cysteine 494–cysteine 503. An O-linked (Glc...) serine glycan is attached at serine 474. O-linked (Fuc...) threonine glycosylation occurs at threonine 482. Residues aspartate 485 and glutamine 486 each contribute to the Ca(2+) site. Asparagine 506, threonine 507, and glutamate 509 together coordinate Ca(2+). The EGF-like 12; calcium-binding domain occupies 506 to 542 (NTDECASSPCLHNGHCMDKINEFLCQCPKGFSGHLCQ). Cystine bridges form between cysteine 510/cysteine 521, cysteine 515/cysteine 530, cysteine 532/cysteine 541, cysteine 548/cysteine 559, cysteine 553/cysteine 568, cysteine 570/cysteine 579, cysteine 586/cysteine 596, cysteine 591/cysteine 605, cysteine 607/cysteine 616, cysteine 623/cysteine 634, cysteine 628/cysteine 643, cysteine 645/cysteine 654, cysteine 661/cysteine 671, cysteine 666/cysteine 680, cysteine 682/cysteine 691, cysteine 698/cysteine 709, cysteine 703/cysteine 718, cysteine 720/cysteine 729, cysteine 736/cysteine 746, cysteine 741/cysteine 755, cysteine 757/cysteine 766, cysteine 773/cysteine 784, cysteine 778/cysteine 793, cysteine 795/cysteine 804, cysteine 811/cysteine 822, cysteine 816/cysteine 831, cysteine 833/cysteine 842, and cysteine 849/cysteine 860. A glycan (O-linked (Glc...) serine) is linked at serine 512. 2 residues coordinate Ca(2+): aspartate 523 and lysine 524. The EGF-like 13; calcium-binding domain maps to 544–580 (DVDECASTPCKNGAKCLDGPNTYTCVCTEGYTGTHCE). Serine 550 carries O-linked (Glc...) serine glycosylation. Residues 582–617 (DIDECDPDPCHYGFCKDGVATFTCLCQPGYTGHHCE) form the EGF-like 14; calcium-binding domain. The 37-residue stretch at 619-655 (NINECHSQPCRHGGTCQDRDNSYLCLCLKGTTGPNCE) folds into the EGF-like 15; calcium-binding domain. Serine 625 is a glycosylation site (O-linked (Glc...) serine). Residue threonine 633 is glycosylated (O-linked (Fuc...) threonine). Positions 657–692 (NLDDCASNPCDSGTCLDKIDGYECACEPGYTGSMCN) constitute an EGF-like 16; calcium-binding domain. Residue serine 663 is glycosylated (O-linked (Glc...) serine). The EGF-like 17; calcium-binding domain occupies 694–730 (NIDECAGSPCHNGGTCEDGIAGFTCRCPEGYHDPTCL). O-linked (Fuc...) threonine glycosylation occurs at threonine 708. The EGF-like 18; calcium-binding domain occupies 732–767 (EVNECNSNPCIHGACRDGLNGYKCDCAPGWSGTNCD). Serine 738 carries O-linked (Glc...) serine glycosylation. The EGF-like 19 domain maps to 769–805 (NNNECESNPCVNGGTCKDMTSGYVCTCREGFSGPNCQ). O-linked (Glc...) serine glycosylation is present at serine 775. An O-linked (Fuc...) threonine glycan is attached at threonine 783. A glycan (O-linked (GlcNAc) serine) is linked at serine 800. The EGF-like 20; calcium-binding domain maps to 807–843 (NINECASNPCLNQGTCIDDVAGYKCNCPLPYTGATCE). O-linked (Glc...) serine glycosylation is present at serine 813. A glycan (O-linked (Fuc...) threonine) is linked at threonine 821. Residues 845-883 (VLAPCATSPCKNSGVCKESEDYESFSCVCPTGWQGQTCE) enclose the EGF-like 21 domain. The 37-residue stretch at 885–921 (DINECVKSPCRHGASCQNTNGSYRCLCQAGYTGRNCE) folds into the EGF-like 22; calcium-binding domain. The N-linked (GlcNAc...) asparagine glycan is linked to asparagine 904. An O-linked (GlcNAc) threonine glycan is attached at threonine 916. The EGF-like 23 domain maps to 923–959 (DIDDCRPNPCHNGGSCTDGINMAFCDCLPGFQGAFCE). Serine 937 carries an O-linked (Fuc) serine glycan. The EGF-like 24; calcium-binding domain maps to 961–997 (DINECASNPCRNGANCTDCVDSYTCTCPAGFNGIHCE). Serine 967 carries an O-linked (Glc...) serine glycan. Asparagine 975 is a glycosylation site (N-linked (GlcNAc...) asparagine). EGF-like domains lie at 999 to 1035 (NTPD…SYCQ), 1037 to 1073 (DVNE…LNCQ), 1075 to 1111 (LVHW…FNCD), 1113 to 1159 (LSVS…SYCE), and 1161 to 1197 (EVDE…SNCS). Residue threonine 1013 is glycosylated (O-linked (Fuc...) threonine). A glycan (O-linked (Glc...) serine) is linked at serine 1043. The O-linked (Fuc...) threonine glycan is linked to threonine 1051. Serine 1081 carries an O-linked (Glc...) serine glycan. A disulfide bridge links cysteine 1117 with cysteine 1138. The O-linked (Fuc...) threonine glycan is linked to threonine 1175. The N-linked (GlcNAc...) asparagine glycan is linked to asparagine 1195. Positions 1199–1235 (EINECLSQPCQNGGTCIDLTNTYKCSCPRGTQGVHCE) constitute an EGF-like 30; calcium-binding domain. O-linked (Glc...) serine glycosylation is present at serine 1205. Threonine 1213 carries an O-linked (Fuc...) threonine glycan. Residues 1237–1281 (NVDDCHPHLDPASRSPKCFNNGTCVDQVGGYSCTCPPGFVGERCE) form the EGF-like 31; calcium-binding domain. N-linked (GlcNAc...) asparagine glycosylation occurs at asparagine 1257. EGF-like domains are found at residues 1283 to 1321 (DINE…RRCE), 1323 to 1362 (VING…ATCE), 1364 to 1400 (DART…PECQ), and 1403 to 1442 (ASSP…LLCH). A glycan (O-linked (Glc...) serine) is linked at serine 1289. Residue threonine 1378 is glycosylated (O-linked (Fuc...) threonine). Threonine 1395 carries an O-linked (GlcNAc...) threonine glycan. Threonine 1418 carries O-linked (Fuc...) threonine; alternate glycosylation. The O-linked (GalNAc...) threonine; alternate glycan is linked to threonine 1418. LNR repeat units follow at residues 1465 to 1505 (CELP…PWKN), 1506 to 1547 (CTQS…CNPL), and 1548 to 1587 (YDQY…RLAA). Ca(2+)-binding residues include aspartate 1473, asparagine 1476, aspartate 1491, and aspartate 1494. The N-linked (GlcNAc...) asparagine glycan is linked to asparagine 1505. Asparagine 1603 is a glycosylation site (N-linked (GlcNAc...) asparagine). A glycan (O-linked (GalNAc...) threonine) is linked at threonine 1731. The segment at 1734 to 1766 (PPLPSQLHLMYLAAAAFVLLFFVGCGVLLSRKR) is interaction with PSEN1. Residues 1742–1762 (LMYLAAAAFVLLFFVGCGVLL) traverse the membrane as a helical segment. The Cytoplasmic segment spans residues 1763–2527 (SRKRRRQHGQ…QITHIPEAFK (765 aa)). Lysine 1765 participates in a covalent cross-link: Glycyl lysine isopeptide (Lys-Gly) (interchain with G-Cter in ubiquitin). A disordered region spans residues 1786–1814 (KKKRREPLGEDSVGLKPLKNASDGALMDD). Residue threonine 1867 is modified to Phosphothreonine. ANK repeat units lie at residues 1933–1962 (TGET…DANI), 1966–1996 (MGRT…DLDA), 2000–2029 (DGTT…DVNA), 2033–2062 (LGKS…NKDM), and 2066–2095 (KEET…NRDI). The segment at 1953–1961 (LLEASADAN) is HIF1AN-binding. A (3S)-3-hydroxyasparagine; by HIF1AN; partial modification is found at asparagine 1961. Residues 2020-2028 (LINSHADVN) are HIF1AN-binding. Asparagine 2028 carries the (3S)-3-hydroxyasparagine; by HIF1AN modification. Disordered regions lie at residues 2157–2201 (SATQ…DSSS), 2378–2424 (QPQN…SLPV), and 2436–2527 (PTSL…EAFK). A compositionally biased stretch (low complexity) spans 2378–2391 (QPQNLQPPSQPHLS). Residues 2436–2474 (PTSLPSSMVPPMTTTQFLTPPSQHSYSSSPVDNTPSHQL) are compositionally biased toward polar residues. Residues 2484 to 2499 (PSPESPDQWSSSSPHS) show a composition bias toward low complexity. A compositionally biased stretch (polar residues) spans 2500–2520 (NISDWSEGISSPPTSMPSQIT).

The protein belongs to the NOTCH family. As to quaternary structure, heterodimer of a C-terminal fragment N(TM) and an N-terminal fragment N(EC) which are probably linked by disulfide bonds. Interacts with DNER, DTX1, DTX2 and RBPJ/RBPSUH. Also interacts with MAML1, MAML2 and MAML3 which act as transcriptional coactivators for NOTCH1. Notch 1 intracellular domain interacts with SNW1; the interaction involves multimerized NOTCH1 NICD and is implicated in a formation of an intermediate preactivation complex which associates with DNA-bound CBF-1/RBPJ. The activated membrane-bound form interacts with AAK1 which promotes NOTCH1 stabilization. Forms a trimeric complex with FBXW7 and SGK1. Interacts with HIF1AN. HIF1AN negatively regulates the function of notch intracellular domain (NICD), accelerating myogenic differentiation. Interacts (via NICD) with SNAI1 (via zinc fingers); the interaction induces SNAI1 degradation via MDM2-mediated ubiquitination and inhibits SNAI1-induced cell invasion. Interacts (via NICD) with MDM2A. Interacts (via NICD) with BCL6; the interaction decreases MAML1 recruitment by NOTCH1 NICD on target genes DNA and inhibits NOTCH1 transactivation activity. Interacts with THBS4. Interacts (via the EGF-like repeat region) with CCN3 (via CTCK domain). Interacts (via EGF-like domains) with DLL4 (via N-terminal DSL and MNNL domains). Interacts with ZMIZ1. Interacts (via NICD domain) with MEGF10 (via the cytoplasmic domain). Interacts with DLL1 and JAG1. Interacts (via NICD domain) with PRAG1. Forms a complex with PRAG1, N1ICD and MAML1, in a MAML1-dependent manner. Interacts (via transmembrane region) with PSEN1; the interaction is direct. Interacts with ZFP64. Post-translationally, synthesized in the endoplasmic reticulum as an inactive form which is proteolytically cleaved by a furin-like convertase in the trans-Golgi network before it reaches the plasma membrane to yield an active, ligand-accessible form. Cleavage results in a C-terminal fragment N(TM) and a N-terminal fragment N(EC). Following ligand binding, it is cleaved by ADAM17 to yield a membrane-associated intermediate fragment called notch extracellular truncation (NEXT). Following endocytosis, this fragment is then cleaved by one of the catalytic subunits of gamma-secretase (PSEN1 or PSEN2) to release a Notch-derived peptide containing the intracellular domain (NICD) from the membrane. Phosphorylated. In terms of processing, O-linked glycosylation by GALNT11 is involved in determination of left/right symmetry: glycosylation promotes activation of NOTCH1, possibly by promoting cleavage by ADAM17, modulating the balance between motile and immotile (sensory) cilia at the left-right organiser (LRO). O-glycosylated on the EGF-like domains. O-glucosylated at Ser-451 by KDELC1 and KDELC2. Contains both O-linked fucose and O-linked glucose in the EGF-like domains 11, 12 and 13, which are interacting with the residues on DLL4. MFNG-, RFNG- and LFNG-mediated modification of O-fucose residues at specific EGF-like domains results in inhibition of its activation by JAG1 and enhancement of its activation by DLL1 via an increased binding to DLL1. Post-translationally, ubiquitinated. Undergoes 'Lys-29'-linked polyubiquitination by ITCH; promotes the lysosomal degradation of non-activated internalized NOTCH1. Deubiquitination by USP12 is required for transport of internalized non-activated receptor from late endosomes to lysosomes for degradation. Monoubiquitination at Lys-1765 is required for activation by gamma-secretase cleavage, it promotes interaction with AAK1, which stabilizes it. Deubiquitination by EIF3F is necessary for nuclear import of activated Notch. Hydroxylated at Asn-1961 by HIF1AN. Hydroxylated at Asn-2028 by HIF1AN. Hydroxylation reduces affinity for HI1AN and may thus indirectly modulate negative regulation of NICD.

Its subcellular location is the cell membrane. It localises to the late endosome membrane. The protein localises to the nucleus. Its function is as follows. Functions as a receptor for membrane-bound ligands Jagged-1 (JAG1), Jagged-2 (JAG2) and Delta-1 (DLL1) to regulate cell-fate determination. Upon ligand activation through the released notch intracellular domain (NICD) it forms a transcriptional activator complex with RBPJ/RBPSUH and activates genes of the enhancer of split locus. Affects the implementation of differentiation, proliferation and apoptotic programs. Involved in angiogenesis; negatively regulates endothelial cell proliferation and migration and angiogenic sprouting. Involved in the maturation of both CD4(+) and CD8(+) cells in the thymus. Important for follicular differentiation and possibly cell fate selection within the follicle. During cerebellar development, functions as a receptor for neuronal DNER and is involved in the differentiation of Bergmann glia. Represses neuronal and myogenic differentiation. May play an essential role in postimplantation development, probably in some aspect of cell specification and/or differentiation. May be involved in mesoderm development, somite formation and neurogenesis. May enhance HIF1A function by sequestering HIF1AN away from HIF1A. Required for the THBS4 function in regulating protective astrogenesis from the subventricular zone (SVZ) niche after injury. Involved in determination of left/right symmetry by modulating the balance between motile and immotile (sensory) cilia at the left-right organiser (LRO). This chain is Neurogenic locus notch homolog protein 1 (NOTCH1), found in Cricetulus griseus (Chinese hamster).